The chain runs to 176 residues: Dual-action ribosomal maturation protein DarP (176 aa).

Belongs to the DarP family.

Its subcellular location is the cytoplasm. In terms of biological role, member of a network of 50S ribosomal subunit biogenesis factors which assembles along the 30S-50S interface, preventing incorrect 23S rRNA structures from forming. Promotes peptidyl transferase center (PTC) maturation. In Actinobacillus pleuropneumoniae serotype 5b (strain L20), this protein is Dual-action ribosomal maturation protein DarP.